The chain runs to 411 residues: Argininosuccinate lyase (411 aa).

The protein belongs to the lyase 1 family. Argininosuccinate lyase subfamily.

It is found in the cytoplasm. The catalysed reaction is 2-(N(omega)-L-arginino)succinate = fumarate + L-arginine. It participates in amino-acid biosynthesis; L-arginine biosynthesis; L-arginine from L-ornithine and carbamoyl phosphate: step 3/3. The chain is Argininosuccinate lyase from Legionella pneumophila (strain Paris).